The following is a 314-amino-acid chain: Probable cell division protein WhiA (314 aa).

The H-T-H motif DNA-binding region spans 274–308 (SLKELGEMVSTGPISKSGVNHRLRKLNDLADKIRN).

This sequence belongs to the WhiA family.

Its function is as follows. Involved in cell division and chromosome segregation. This chain is Probable cell division protein WhiA, found in Staphylococcus aureus (strain USA300).